We begin with the raw amino-acid sequence, 403 residues long: MKRERFKPPEPDDPLCCCGDIDQQREYCCCDCEELDDACERLLRGEPDKPDVFSRFISRMADRLGVSCCTVGPLRLELSVLPPMVLIPGLLRVAAINCLLGVIILTALPLLVLWYYYMTHRRKRRTLFFLSLALFSLAYMYYLFLTEIVPRGDVTHLQVVTATTGMMLTLISLVRTKQGPGFVKSQSLALGINSSLATNRSTNLTLDTDLRNGVSHLKGEKDVKKKCPVCQLVRPPRAGHCRICGACVLRMDHHCVWINSCVGQANHRQFILTLLLFLLTSFYGISLVLRSICPKQSLFTAMLYCPGVYNQYSTALCFTCVWYSVIITGGLLHLFILQIINVSCNVTEREAQIALRNKTGRRRFCGLVVETGDHSRGFLQNWIQFLTMNMDEIGSSLNLTDMV.

At 1–70 (MKRERFKPPE…ADRLGVSCCT (70 aa)) the chain is on the cytoplasmic side. A helical transmembrane segment spans residues 71–91 (VGPLRLELSVLPPMVLIPGLL). R92 is a topological domain (lumenal). Residues 93-113 (VAAINCLLGVIILTALPLLVL) traverse the membrane as a helical segment. Over 114 to 125 (WYYYMTHRRKRR) the chain is Cytoplasmic. The chain crosses the membrane as a helical span at residues 126-146 (TLFFLSLALFSLAYMYYLFLT). Residues 147–153 (EIVPRGD) lie on the Lumenal side of the membrane. The chain crosses the membrane as a helical span at residues 154–174 (VTHLQVVTATTGMMLTLISLV). Residues 175–268 (RTKQGPGFVK…NSCVGQANHR (94 aa)) are Cytoplasmic-facing. Residues 225-275 (KKCPVCQLVRPPRAGHCRICGACVLRMDHHCVWINSCVGQANHRQFILTLL) enclose the DHHC domain. C255 (S-palmitoyl cysteine intermediate) is an active-site residue. The chain crosses the membrane as a helical span at residues 269 to 289 (QFILTLLLFLLTSFYGISLVL). The Lumenal portion of the chain corresponds to 290-319 (RSICPKQSLFTAMLYCPGVYNQYSTALCFT). Residues 320–340 (CVWYSVIITGGLLHLFILQII) traverse the membrane as a helical segment. Over 341–403 (NVSCNVTERE…GSSLNLTDMV (63 aa)) the chain is Cytoplasmic.

Belongs to the DHHC palmitoyltransferase family.

Its subcellular location is the golgi apparatus membrane. The protein localises to the golgi apparatus. The protein resides in the trans-Golgi network membrane. It catalyses the reaction L-cysteinyl-[protein] + hexadecanoyl-CoA = S-hexadecanoyl-L-cysteinyl-[protein] + CoA. In terms of biological role, palmitoyltransferase that could catalyze the addition of palmitate onto various protein substrates and be involved in a variety of cellular processes. In Danio rerio (Zebrafish), this protein is Palmitoyltransferase ZDHHC23-A (zdhhc23a).